The sequence spans 1058 residues: Carbamoyl phosphate synthase large chain (1058 aa).

A carboxyphosphate synthetic domain region spans residues methionine 1–glutamate 401. Positions 129, 169, 175, 176, 208, 210, 215, 241, 242, 243, 284, and 298 each coordinate ATP. One can recognise an ATP-grasp 1 domain in the interval lysine 133–valine 327. The Mg(2+) site is built by glutamine 284, glutamate 298, and asparagine 300. Mn(2+)-binding residues include glutamine 284, glutamate 298, and asparagine 300. Positions isoleucine 402–serine 546 are oligomerization domain. The segment at valine 547–asparagine 929 is carbamoyl phosphate synthetic domain. Positions glutamate 671–leucine 861 constitute an ATP-grasp 2 domain. Residues arginine 707, serine 746, isoleucine 748, glutamate 752, glycine 777, valine 778, histidine 779, serine 780, glutamine 820, and glutamate 832 each contribute to the ATP site. Mg(2+) is bound by residues glutamine 820, glutamate 832, and asparagine 834. Positions 820, 832, and 834 each coordinate Mn(2+). An MGS-like domain is found at serine 930–isoleucine 1058. An allosteric domain region spans residues serine 930 to isoleucine 1058.

Belongs to the CarB family. In terms of assembly, composed of two chains; the small (or glutamine) chain promotes the hydrolysis of glutamine to ammonia, which is used by the large (or ammonia) chain to synthesize carbamoyl phosphate. Tetramer of heterodimers (alpha,beta)4. Mg(2+) serves as cofactor. Requires Mn(2+) as cofactor.

The catalysed reaction is hydrogencarbonate + L-glutamine + 2 ATP + H2O = carbamoyl phosphate + L-glutamate + 2 ADP + phosphate + 2 H(+). It carries out the reaction hydrogencarbonate + NH4(+) + 2 ATP = carbamoyl phosphate + 2 ADP + phosphate + 2 H(+). It functions in the pathway amino-acid biosynthesis; L-arginine biosynthesis; carbamoyl phosphate from bicarbonate: step 1/1. It participates in pyrimidine metabolism; UMP biosynthesis via de novo pathway; (S)-dihydroorotate from bicarbonate: step 1/3. In terms of biological role, large subunit of the glutamine-dependent carbamoyl phosphate synthetase (CPSase). CPSase catalyzes the formation of carbamoyl phosphate from the ammonia moiety of glutamine, carbonate, and phosphate donated by ATP, constituting the first step of 2 biosynthetic pathways, one leading to arginine and/or urea and the other to pyrimidine nucleotides. The large subunit (synthetase) binds the substrates ammonia (free or transferred from glutamine from the small subunit), hydrogencarbonate and ATP and carries out an ATP-coupled ligase reaction, activating hydrogencarbonate by forming carboxy phosphate which reacts with ammonia to form carbamoyl phosphate. The chain is Carbamoyl phosphate synthase large chain from Streptococcus pyogenes serotype M3 (strain ATCC BAA-595 / MGAS315).